Consider the following 494-residue polypeptide: DDB1- and CUL4-associated factor 4 (494 aa).

The segment at 1-65 is disordered; it reads MHQSSWKSRR…AGSSSVPDLP (65 aa). Residues 7 to 20 show a composition bias toward basic residues; it reads KSRRHRRRGHRHSA. Over residues 51 to 60 the composition is skewed to low complexity; that stretch reads STSSTAGSSS. 2 WD repeats span residues 367–406 and 409–450; these read FHDSAVTSVQILQEEQCLMASDMAGTIKLWDLRTTKCIRQ and GHVN…LLRT.

Interacts with DDB1 and CUL4A.

Its pathway is protein modification; protein ubiquitination. May function as a substrate receptor for CUL4-DDB1 E3 ubiquitin-protein ligase complex. This chain is DDB1- and CUL4-associated factor 4 (DCAF4), found in Bos taurus (Bovine).